The chain runs to 151 residues: UPF0208 membrane protein ESA_00924 (151 aa).

The next 2 helical transmembrane spans lie at 46–65 and 69–91; these read FAIR…QIAL and LGPA…WWLG.

The protein belongs to the UPF0208 family.

The protein localises to the cell inner membrane. The sequence is that of UPF0208 membrane protein ESA_00924 from Cronobacter sakazakii (strain ATCC BAA-894) (Enterobacter sakazakii).